We begin with the raw amino-acid sequence, 299 residues long: Epimerase family protein SH2119 (299 aa).

This sequence belongs to the NAD(P)-dependent epimerase/dehydratase family. SDR39U1 subfamily.

This is Epimerase family protein SH2119 from Staphylococcus haemolyticus (strain JCSC1435).